A 254-amino-acid chain; its full sequence is Uridylate kinase (254 aa).

Lys-9–Gly-12 contributes to the ATP binding site. Gly-51 is a UMP binding site. The ATP site is built by Gly-52 and Arg-56. UMP-binding positions include Asp-72 and Ser-133 to Thr-140. The ATP site is built by Thr-160, Tyr-166, and Asp-169.

This sequence belongs to the UMP kinase family. Homohexamer.

It localises to the cytoplasm. It catalyses the reaction UMP + ATP = UDP + ADP. Its pathway is pyrimidine metabolism; CTP biosynthesis via de novo pathway; UDP from UMP (UMPK route): step 1/1. Inhibited by UTP. In terms of biological role, catalyzes the reversible phosphorylation of UMP to UDP. The chain is Uridylate kinase from Synechococcus sp. (strain JA-3-3Ab) (Cyanobacteria bacterium Yellowstone A-Prime).